The primary structure comprises 1475 residues: Gag-Pol polyprotein (1475 aa).

Over residues 130–147 the composition is skewed to low complexity; sequence TQNTQNKKQTSNQTNTQS. The disordered stretch occupies residues 130–159; it reads TQNTQNKKQTSNQTNTQSLPAITTQDGTPR. 2 CCHC-type zinc fingers span residues 403–420 and 421–438; these read RRCYGCGKTGHLKRNCKQ and QKCYHCGKPGHQARNCRS. The Peptidase A2 domain maps to 492–565; that stretch reads VKGLVDTGAD…TPVNLFGRSL (74 aa). Asp497 is a catalytic residue. One can recognise a Reverse transcriptase domain in the interval 619-806; it reads EGKISEAAWD…ERVKWIGFEL (188 aa). The RNase H type-1 domain occupies 999–1119; the sequence is RENLTTYYTD…ADEGVKKALE (121 aa). The segment at 1199-1240 adopts an Integrase-type zinc-finger fold; that stretch reads ENIPSATEDHERWHTSPDILVRQFHLPKRIAKEIVARCQECK. Zn(2+)-binding residues include His1208, His1212, Cys1236, and Cys1239. The Integrase catalytic domain maps to 1248–1400; sequence RGTNPRGRFL…TPYEIYLESE (153 aa). Positions 1419–1465 form a DNA-binding region, integrase-type; that stretch reads KWCYVRNRRKEWKGPYKVLWDGDGAAVIEEEGKTALYPHRHMRFIPP.

As to quaternary structure, interacts with host light chain cytoplasmic dynein DYNLL1; this interaction is critical for intracellular microtubule-dependent viral genome transport. In terms of processing, specific enzymatic cleavages by the viral protease yield mature proteins. The protease is released by autocatalytic cleavage. The polyprotein is cleaved during and after budding, this process is termed maturation.

The protein resides in the virion. It catalyses the reaction DNA(n) + a 2'-deoxyribonucleoside 5'-triphosphate = DNA(n+1) + diphosphate. The catalysed reaction is Endohydrolysis of RNA in RNA/DNA hybrids. Three different cleavage modes: 1. sequence-specific internal cleavage of RNA. Human immunodeficiency virus type 1 and Moloney murine leukemia virus enzymes prefer to cleave the RNA strand one nucleotide away from the RNA-DNA junction. 2. RNA 5'-end directed cleavage 13-19 nucleotides from the RNA end. 3. DNA 3'-end directed cleavage 15-20 nucleotides away from the primer terminus.. It carries out the reaction 3'-end directed exonucleolytic cleavage of viral RNA-DNA hybrid.. Functionally, matrix protein p16 forms the outer shell of the core of the virus, lining the inner surface of the viral membrane. In terms of biological role, capsid protein p26 forms the conical core of the virus that encapsulates the genomic RNA-nucleocapsid complex. Interaction between incoming particle-associated Gag proteins and host dynein allows intracellular microtubule-dependent virus transport toward the perinuclear region, prior to nucleus translocation and integration into host genome. The aspartyl protease mediates proteolytic cleavages of Gag and Gag-Pol polyproteins during or shortly after the release of the virion from the plasma membrane. Cleavages take place as an ordered, step-wise cascade to yield mature proteins. This process is called maturation. Displays maximal activity during the budding process just prior to particle release from the cell. Its function is as follows. Reverse transcriptase/ribonuclease H (RT) is a multifunctional enzyme that converts the viral RNA genome into dsDNA in the cytoplasm, shortly after virus entry into the cell. This enzyme displays a DNA polymerase activity that can copy either DNA or RNA templates, and a ribonuclease H (RNase H) activity that cleaves the RNA strand of RNA-DNA heteroduplexes in a partially processive 3' to 5' endonucleasic mode. Conversion of viral genomic RNA into dsDNA requires many steps. A tRNA binds to the primer-binding site (PBS) situated at the 5'-end of the viral RNA. RT uses the 3' end of the tRNA primer to perform a short round of RNA-dependent minus-strand DNA synthesis. The reading proceeds through the U5 region and ends after the repeated (R) region which is present at both ends of viral RNA. The portion of the RNA-DNA heteroduplex is digested by the RNase H, resulting in a ssDNA product attached to the tRNA primer. This ssDNA/tRNA hybridizes with the identical R region situated at the 3' end of viral RNA. This template exchange, known as minus-strand DNA strong stop transfer, can be either intra- or intermolecular. RT uses the 3' end of this newly synthesized short ssDNA to perform the RNA-dependent minus-strand DNA synthesis of the whole template. RNase H digests the RNA template except for a polypurine tract (PPT) situated at the 5'-end of the genome. It is not clear if both polymerase and RNase H activities are simultaneous. RNase H probably can proceed both in a polymerase-dependent (RNA cut into small fragments by the same RT performing DNA synthesis) and a polymerase-independent mode (cleavage of remaining RNA fragments by free RTs). Secondly, RT performs DNA-directed plus-strand DNA synthesis using the PPT that has not been removed by RNase H as primer. PPT and tRNA primers are then removed by RNase H. The 3' and 5' ssDNA PBS regions hybridize to form a circular dsDNA intermediate. Strand displacement synthesis by RT to the PBS and PPT ends produces a blunt ended, linear dsDNA copy of the viral genome that includes long terminal repeats (LTRs) at both ends. Functionally, integrase catalyzes viral DNA integration into the host chromosome, by performing a series of DNA cutting and joining reactions. This enzyme activity takes place after virion entry into a cell and reverse transcription of the RNA genome in dsDNA. The polypeptide is Gag-Pol polyprotein (gag-pol) (Bovine immunodeficiency virus (strain R29) (BIV)).